Here is a 463-residue protein sequence, read N- to C-terminus: Adenylosuccinate synthetase, chloroplastic (463 aa).

Residues 44–50 (GDEGKGK) and 72–74 (GHT) contribute to the GTP site. Asp-45 serves as the catalytic Proton acceptor. Mg(2+) contacts are provided by Asp-45 and Gly-72. Residues 45-48 (DEGK), 70-73 (NAGH), Thr-164, Arg-178, Asn-256, Thr-271, and Arg-335 contribute to the IMP site. The active-site Proton donor is the His-73. Position 331-337 (331-337 (TTTGRPR)) interacts with substrate. GTP contacts are provided by residues Arg-337, 363–365 (KLD), and 446–448 (GVG).

The protein belongs to the adenylosuccinate synthetase family. In terms of assembly, homodimer. Mg(2+) is required as a cofactor.

It is found in the plastid. Its subcellular location is the chloroplast. It catalyses the reaction IMP + L-aspartate + GTP = N(6)-(1,2-dicarboxyethyl)-AMP + GDP + phosphate + 2 H(+). The protein operates within purine metabolism; AMP biosynthesis via de novo pathway; AMP from IMP: step 1/2. In terms of biological role, plays an important role in the de novo pathway and in the salvage pathway of purine nucleotide biosynthesis. Catalyzes the first committed step in the biosynthesis of AMP from IMP. This chain is Adenylosuccinate synthetase, chloroplastic, found in Chlamydomonas reinhardtii (Chlamydomonas smithii).